The primary structure comprises 230 residues: MDKKEQDRLKKEAAEKAANMVQSGMILGVGTGSTVAFFIDALGKRKDEEDLKLKAIVTTSNRSKKQLESLGFEVSELADIDQADLTVDGSDRVADNLDGIKGGGGALTLEKNVAINSKKIVWIVDESKLVHRLSGFPLPVEVLPISCEQNFRRFEQEGLKPQWRTDGDKRYITHYGNYIIDLAVDPIPAPHGLADYLDHTVGVVEHGLFLDMCDEVIIAHSDGTIEDKIK.

Substrate is bound by residues 31–34 (TGST), 88–91 (DGSD), and 101–104 (KGGG). The active-site Proton acceptor is the Glu-110. Lys-128 is a substrate binding site.

It belongs to the ribose 5-phosphate isomerase family. In terms of assembly, homodimer.

The enzyme catalyses aldehydo-D-ribose 5-phosphate = D-ribulose 5-phosphate. It participates in carbohydrate degradation; pentose phosphate pathway; D-ribose 5-phosphate from D-ribulose 5-phosphate (non-oxidative stage): step 1/1. Catalyzes the reversible conversion of ribose-5-phosphate to ribulose 5-phosphate. In Lactobacillus acidophilus (strain ATCC 700396 / NCK56 / N2 / NCFM), this protein is Ribose-5-phosphate isomerase A.